We begin with the raw amino-acid sequence, 439 residues long: Forkhead box protein J1-A (439 aa).

Positions 124 to 218 form a DNA-binding region, fork-head; it reads KPPYSYATLI…INGAMKKRRL (95 aa). The tract at residues 273–293 is disordered; that stretch reads EHGWNSISDGKSHKRKQPLPK. Basic residues predominate over residues 284-293; it reads SHKRKQPLPK.

Belongs to the FOXJ1 family. Expressed in two independent areas of stage 10-11 embryos; in the dorsal blastopore lip (Spemann organizer) and shortly after in the ectodermal cells of the animal cap. As development proceeds, cells of the animal cap contribute to the epidermis and show a spotty pattern, which suggests expression in ciliated epidermal cells. Distribution of these cells is uniform in the trunk area of the embryo but more random in the head, being practically absent in the cement gland and olfactory placode. The spotted pattern becomes more dispersed as embryos grow in size. Due to cell movements during gastrulation, expression in the dorsal lip becomes located in the dorsal midline with expression restricted to the neuroectoderm. Expressed transiently in cells of the newly formed neural floor plate in the tail of older tadpoles.

The protein resides in the nucleus. In terms of biological role, key transcription factor required for motile ciliogenesis. Activates genes essential for motile cilia formation and function. Required for ciliogenesis in multiciliated cells. This is Forkhead box protein J1-A (foxj1-a) from Xenopus laevis (African clawed frog).